The primary structure comprises 75 residues: Insecticidal toxin OcyC10 (75 aa).

The signal sequence occupies residues Met1–Ala19. Intrachain disulfides connect Cys50–Cys62 and Cys56–Cys68.

As to expression, expressed by the venom gland.

Its subcellular location is the secreted. Its function is as follows. Insecticidal toxin. The protein is Insecticidal toxin OcyC10 of Opisthacanthus cayaporum (South American scorpion).